The following is a 564-amino-acid chain: Bifunctional protein CrtB/UppS (564 aa).

Aspartate 329 is a catalytic residue. Aspartate 329 contributes to the Mg(2+) binding site. Residues 330–333 (GNRR), tryptophan 334, histidine 346, and 374–376 (STE) each bind substrate. Asparagine 377 serves as the catalytic Proton acceptor. Substrate-binding positions include tryptophan 378, arginine 380, arginine 497, and 502–504 (RIS). Glutamate 515 lines the Mg(2+) pocket.

In the N-terminal section; belongs to the phytoene/squalene synthase family. The protein in the C-terminal section; belongs to the UPP synthase family. As to quaternary structure, homodimer. The cofactor is Mg(2+).

The catalysed reaction is 2 (2E,6E,10E)-geranylgeranyl diphosphate = 15-cis-phytoene + 2 diphosphate. It functions in the pathway carotenoid biosynthesis; phytoene biosynthesis; all-trans-phytoene from geranylgeranyl diphosphate: step 1/1. Functionally, catalyzes the reaction from prephytoene diphosphate to phytoene. Catalyzes the condensation of isopentenyl diphosphate (IPP) with allylic pyrophosphates generating different type of terpenoids. In Streptomyces coelicolor (strain ATCC BAA-471 / A3(2) / M145), this protein is Bifunctional protein CrtB/UppS (crtB/uppS3).